Reading from the N-terminus, the 552-residue chain is Thermosome subunit beta (552 aa).

The tract at residues 531-552 is disordered; the sequence is AGKKGGSEPGGKKEKEEKSSED. Residues 540–552 are compositionally biased toward basic and acidic residues; that stretch reads GGKKEKEEKSSED.

Belongs to the TCP-1 chaperonin family. In terms of assembly, forms a heterooligomeric complex of two stacked nine-membered rings; one of alpha and the other of beta subunits. Sometimes called a 'rosettasome'.

It localises to the cytoplasm. It catalyses the reaction ATP + H2O = ADP + phosphate + H(+). In terms of biological role, molecular chaperone; binds unfolded polypeptides in vitro, stimulates protein folding and has ATPase activity. One of the most abundant proteins in the cell at all temperatures. In Saccharolobus shibatae (strain ATCC 51178 / DSM 5389 / JCM 8931 / NBRC 15437 / B12) (Sulfolobus shibatae), this protein is Thermosome subunit beta (thsB).